The sequence spans 276 residues: NADPH-dependent 7-cyano-7-deazaguanine reductase (276 aa).

80-82 (VES) is a binding site for substrate. 82–83 (SK) contributes to the NADPH binding site. C183 serves as the catalytic Thioimide intermediate. D190 (proton donor) is an active-site residue. 222 to 223 (HE) contacts substrate. Residue 251 to 252 (RG) coordinates NADPH.

It belongs to the GTP cyclohydrolase I family. QueF type 2 subfamily. Homodimer.

It is found in the cytoplasm. The enzyme catalyses 7-aminomethyl-7-carbaguanine + 2 NADP(+) = 7-cyano-7-deazaguanine + 2 NADPH + 3 H(+). It participates in tRNA modification; tRNA-queuosine biosynthesis. Its function is as follows. Catalyzes the NADPH-dependent reduction of 7-cyano-7-deazaguanine (preQ0) to 7-aminomethyl-7-deazaguanine (preQ1). The chain is NADPH-dependent 7-cyano-7-deazaguanine reductase from Burkholderia orbicola (strain MC0-3).